Here is a 249-residue protein sequence, read N- to C-terminus: uncharacterized protein (249 aa).

2 stretches are compositionally biased toward polar residues: residues 66 to 79 (NASLESGQSSTISP) and 92 to 119 (ASGSVSANKTFQSTESSALHQPKSSSSE). The disordered stretch occupies residues 66-142 (NASLESGQSS…GPTSPRVTPG (77 aa)).

The protein resides in the plastid. Its subcellular location is the chloroplast. This is an uncharacterized protein from Chlorella vulgaris (Green alga).